A 116-amino-acid polypeptide reads, in one-letter code: G antigen 2B/2C (116 aa).

The interval 1–116 (MSWRGRSTYR…PEEGEKQSQC (116 aa)) is disordered. 2 stretches are compositionally biased toward acidic residues: residues 31-44 (FSDE…EEGE) and 86-95 (ECEDGPDGQE). Residues 102–116 (EEVKTPEEGEKQSQC) are compositionally biased toward basic and acidic residues.

It belongs to the GAGE family. Expressed in a variety of tumor tissues but not in normal tissues, except testis.

Functionally, antigen, recognized on melanoma by autologous cytolytic T-lymphocytes. The protein is G antigen 2B/2C (GAGE2B) of Homo sapiens (Human).